We begin with the raw amino-acid sequence, 395 residues long: Renin (395 aa).

A signal peptide spans 1 to 21; sequence MLRSWEFVLLISCFLCFSSDA. A propeptide spans 22-43 (activation peptide); the sequence is LQRISLKKMPSIRETLQEMGMK. N-linked (GlcNAc...) asparagine glycosylation occurs at asparagine 64. One can recognise a Peptidase A1 domain in the interval 79–392; it reads YYGEISIGTP…DRQNNRIGFA (314 aa). Residue aspartate 97 is part of the active site. 2 disulfide bridges follow: cysteine 110/cysteine 117 and cysteine 274/cysteine 278. Residue aspartate 283 is part of the active site. Residues cysteine 316 and cysteine 351 are joined by a disulfide bond.

This sequence belongs to the peptidase A1 family. N-glycosylated. As to expression, expressed by the venom gland (at protein level).

Its subcellular location is the secreted. The catalysed reaction is Cleavage of Leu-|-Xaa bond in angiotensinogen to generate angiotensin I.. Its activity is regulated as follows. Inhibited completely by aspartyl protease inhibitor pepstatin A, but not by the serine- or metalloproteinase inhibitors PMSF or EDTA. Its function is as follows. Renin is a highly specific endopeptidase, whose only known function is to generate angiotensin I from angiotensinogen in the plasma, initiating a cascade of reactions that produce an elevation of blood pressure and increased sodium retention by the kidney. This protein is also found in snake venom and shown to specifically cleave human and porcine angiotensinogen into angiotensin I. It does not have general protease activity, no cleavage of alpha or beta casein. May be directly responsible for elevation of blood pressure in the victims of envenomation. The sequence is that of Renin from Echis ocellatus (Ocellated saw-scaled viper).